A 67-amino-acid polypeptide reads, in one-letter code: DNA-directed RNA polymerase subunit omega (67 aa).

The protein belongs to the RNA polymerase subunit omega family. In terms of assembly, the RNAP catalytic core consists of 2 alpha, 1 beta, 1 beta' and 1 omega subunit. When a sigma factor is associated with the core the holoenzyme is formed, which can initiate transcription.

It catalyses the reaction RNA(n) + a ribonucleoside 5'-triphosphate = RNA(n+1) + diphosphate. Functionally, promotes RNA polymerase assembly. Latches the N- and C-terminal regions of the beta' subunit thereby facilitating its interaction with the beta and alpha subunits. The protein is DNA-directed RNA polymerase subunit omega of Paraburkholderia phymatum (strain DSM 17167 / CIP 108236 / LMG 21445 / STM815) (Burkholderia phymatum).